Here is a 266-residue protein sequence, read N- to C-terminus: GTP cyclohydrolase MptA (266 aa).

This sequence belongs to the GTP cyclohydrolase IV family. In terms of assembly, homodimer. It depends on Fe(2+) as a cofactor.

The catalysed reaction is GTP + H2O = 7,8-dihydroneopterin 2',3'-cyclic phosphate + formate + diphosphate + H(+). It participates in cofactor biosynthesis; 5,6,7,8-tetrahydromethanopterin biosynthesis. In terms of biological role, converts GTP to 7,8-dihydro-D-neopterin 2',3'-cyclic phosphate, the first intermediate in the biosynthesis of coenzyme methanopterin. The sequence is that of GTP cyclohydrolase MptA from Pyrococcus abyssi (strain GE5 / Orsay).